The primary structure comprises 509 residues: Angiopoietin-4 (509 aa).

The first 21 residues, 1-21, serve as a signal peptide directing secretion; that stretch reads MLCQPAMLLDGLLLLATMAAA. 8 N-linked (GlcNAc...) asparagine glycosylation sites follow: N105, N135, N149, N167, N256, N306, N317, and N417. Residues 181–269 are a coiled coil; the sequence is LSTNKLERQM…LQQQQQQLTE (89 aa). A Fibrinogen C-terminal domain is found at 288–508; the sequence is KTPKPVFQDC…GTRMMLRPMG (221 aa). A disulfide bond links C297 and C326. A disordered region spans residues 416–436; sequence VNDSSSSAGRKNSLAPQGTKF. A disulfide bridge links C450 with C463.

Homodimer; disulfide-linked. Interacts with TEK/TIE2. As to expression, widely expressed.

The protein localises to the secreted. In terms of biological role, binds to TEK/TIE2, modulating ANGPT1 signaling. Can induce tyrosine phosphorylation of TEK/TIE2. Promotes endothelial cell survival, migration and angiogenesis. The chain is Angiopoietin-4 (Angpt4) from Mus musculus (Mouse).